We begin with the raw amino-acid sequence, 441 residues long: Na(+)/H(+) antiporter NhaA 2 (441 aa).

The next 12 helical transmembrane spans lie at 34–54, 77–97, 115–135, 146–166, 176–196, 199–219, 225–245, 249–269, 290–310, 317–337, 355–375, and 389–409; these read VGGA…NSPW, LTLG…VVGL, ALPM…FVAV, GWAI…AVIS, FLLT…AVFY, EINL…ALCV, SWWL…ESGV, VAGV…AGGP, VAVP…VSGL, PITL…IFLT, WIDV…SLLI, and FVKV…AVLL.

Belongs to the NhaA Na(+)/H(+) (TC 2.A.33) antiporter family.

It localises to the cell membrane. The enzyme catalyses Na(+)(in) + 2 H(+)(out) = Na(+)(out) + 2 H(+)(in). Its function is as follows. Na(+)/H(+) antiporter that extrudes sodium in exchange for external protons. The protein is Na(+)/H(+) antiporter NhaA 2 of Mycobacterium sp. (strain MCS).